We begin with the raw amino-acid sequence, 555 residues long: Zinc transporter ZIP5 (555 aa).

Topologically, residues 1-242 (MGGQTVWMTL…HSQASKTSEG (242 aa)) are extracellular. Positions 108–148 (KHPSQSISHSHSHEDHHPSQGTTNSPPLRESLDAKSALSGS) are disordered. Residues 243 to 263 (FLIALGWASLALLVISLPSLV) traverse the membrane as a helical segment. The Cytoplasmic segment spans residues 264 to 314 (ALGMAPLLQPSVLQVFLCPMAGMAVGTLCGDALLHLMPHAIFSQHTDHQNA). A helical transmembrane segment spans residues 315-335 (VFKGLSVLGGLYLLFIFESLL). The Extracellular segment spans residues 336-408 (GLKQHFKNLK…DGIHNLTDGL (73 aa)). Over residues 363–374 (TSSANQNESSGH) the composition is skewed to polar residues. The tract at residues 363–383 (TSSANQNESSGHGHSHGQAEP) is disordered. The chain crosses the membrane as a helical span at residues 409 to 429 (AIGVAFSQSLTGGFSTAIAVF). Residues 430–452 (CHELPHELGDLAVLLSAGWPVRR) are Cytoplasmic-facing. Residues 453 to 473 (LLVFSGLSALLGFVGVLAGSA) form a helical membrane-spanning segment. At 474-482 (LGNHWASHS) the chain is on the extracellular side. A helical transmembrane segment spans residues 483–503 (PWILTLTAGVFLYVALADMMP). At 504-518 (EMLHGACGSVSPLKR) the chain is on the cytoplasmic side. The helical transmembrane segment at 519 to 539 (FLLQALGLLTGGAIMLCIALF) threads the bilayer. Topologically, residues 540–555 (EDHIAVSLGENSLGEN) are extracellular.

The protein belongs to the ZIP transporter (TC 2.A.5) family.

It localises to the basolateral cell membrane. It carries out the reaction Zn(2+)(in) = Zn(2+)(out). Functionally, uniporter that transports zinc(2+) into polarized cells of enterocytes, pancreatic acinar and endoderm cells across the basolateral membrane and participates, notably, in zinc excretion from the intestine by the uptake of zinc from the blood into the intestine. The transport mechanism is temperature- and concentration-dependent and saturable. Mediates zinc homeostasis that is essential for venous angiogenesis. This is Zinc transporter ZIP5 (slc39a5) from Danio rerio (Zebrafish).